Consider the following 269-residue polypeptide: Proline-rich protein 7 (269 aa).

At 1-9 the chain is on the extracellular side; it reads MVMSQGTYT. The interval 1 to 44 is required for interaction with NMDA receptors; sequence MVMSQGTYTFLTCFAGFWLIWGLIVLLCCFCSFLRRRLKRRQEE. The interval 2-39 is required for membrane localization; the sequence is VMSQGTYTFLTCFAGFWLIWGLIVLLCCFCSFLRRRLK. A helical; Signal-anchor for type III membrane protein transmembrane segment spans residues 10-30; that stretch reads FLTCFAGFWLIWGLIVLLCCF. At 31–269 the chain is on the cytoplasmic side; the sequence is CSFLRRRLKR…IPLFGRTTAV (239 aa). 2 disordered regions span residues 63-83 and 97-121; these read GSLA…RSRL and PLLH…PHPP. The residue at position 64 (S64) is a Phosphoserine. Residues 108–117 show a composition bias toward basic residues; it reads AHPHPHHHAL. Residues 146–166 are required for internalization; it reads PCYEEAVLMAEPPPPYSEVLT. The tract at residues 146–269 is required for apoptosis induction; the sequence is PCYEEAVLMA…IPLFGRTTAV (124 aa). A PDZ-binding motif is present at residues 267 to 269; it reads TAV.

In terms of assembly, forms a complex with NMDA receptor zeta subunit GRIN1 and epsilon subunit GRIN2B. Interacts with GRIN2B. Interacts with GRIN1; the interaction is reduced upon NMDA receptor activity. Found in a postsynaptic membrane complex with DLG4 and GRIN1. Interacts with DLG4 (via PDZ3 domain and to lesser degree via PDZ2 domain). Interacts with JUN. Found in a complex with JUN and FBXW7. Interacts with JUN and FBXW7; the interaction inhibits ubiquitination-mediated JUN degradation promoting its phosphorylation and transcriptional activity. Interacts with SRC. Post-translationally, palmitoylated. In terms of processing, tyrosine phosphorylated, possibly by SRC. Highly expressed in brain, moderately expressed in lymph nodes and T cells and low expression in thymus and spleen. Expressed in single positive progenitor thymocytes, particularly in CD8 single positive thymocytes.

It is found in the cell membrane. The protein resides in the postsynaptic cell membrane. Its subcellular location is the postsynaptic density membrane. It localises to the cytoplasm. The protein localises to the perinuclear region. It is found in the synapse. The protein resides in the cell projection. Its subcellular location is the dendrite. It localises to the nucleus. Functionally, acts as a synapse-to-nucleus messenger to promote NMDA receptor-mediated excitotoxicity in neurons in a JUN-dependent manner. Inhibits ubiquitination-mediated degradation and promotes phosphorylation and transcriptional activity of transcription factor JUN. Might play a redundant role in the regulation of T cell receptor signaling. Might promote apoptosis in T cells. The protein is Proline-rich protein 7 (Prr7) of Mus musculus (Mouse).